The chain runs to 461 residues: CUGBP Elav-like family member 3 (461 aa).

RRM domains are found at residues isoleucine 7–serine 88 and arginine 95–threonine 175. The segment covering proline 345–glutamine 358 has biased composition (pro residues). Residues proline 345 to glycine 375 are disordered. Residues glutamine 359–glutamine 369 are compositionally biased toward low complexity. In terms of domain architecture, RRM 3 spans cysteine 376–proline 454.

It belongs to the CELF/BRUNOL family.

The protein localises to the nucleus. It is found in the cytoplasm. RNA-binding protein involved in the regulation of pre-mRNA alternative splicing. Mediates exon inclusion and/or exclusion in pre-mRNA that are subject to tissue-specific and developmentally regulated alternative splicing. Specifically activates exon 5 inclusion of cardiac isoforms of TNNT2 during heart remodeling at the juvenile to adult transition. Activates the splicing of MAPT/Tau exon 10. Binds to muscle-specific splicing enhancer (MSE) intronic sites flanking the alternative exon 5 of TNNT2 pre-mRNA. In Bos taurus (Bovine), this protein is CUGBP Elav-like family member 3 (CELF3).